Reading from the N-terminus, the 405-residue chain is SPbeta prophage-derived uncharacterized protein YonJ (405 aa).

The stretch at 72–101 (DESNNSLLELELKKVEIMEERKKLQAVKHE) forms a coiled coil.

This is SPbeta prophage-derived uncharacterized protein YonJ (yonJ) from Bacillus subtilis (strain 168).